We begin with the raw amino-acid sequence, 541 residues long: Propionyl-CoA carboxylase beta chain, mitochondrial (541 aa).

Residues 1–28 constitute a mitochondrion transit peptide; it reads MAAVIRIRAMAAGTRLRVLNCGLGTTIR. One can recognise a CoA carboxyltransferase N-terminal domain in the interval 34-292; sequence PVSVNERIEN…SNQDPASIRE (259 aa). The interval 34–535 is carboxyltransferase; that stretch reads PVSVNERIEN…SKKVHRPWRK (502 aa). Phosphoserine is present on Ser73. Lys101 carries the N6-acetyllysine; alternate modification. An N6-succinyllysine; alternate modification is found at Lys101. The residue at position 250 (Lys250) is an N6-succinyllysine. The region spanning 296-535 is the CoA carboxyltransferase C-terminal domain; it reads PSDRLVPELD…SKKVHRPWRK (240 aa). The interval 327-360 is acyl-CoA binding; sequence DEREFFEIMPNYAKNIVIGFARMNGRTVGIVGNQ. An N6-acetyllysine; alternate mark is found at Lys476 and Lys491. N6-succinyllysine; alternate is present on residues Lys476 and Lys491.

The protein belongs to the AccD/PCCB family. The holoenzyme is a dodecamer composed of 6 PCCA/alpha subunits and 6 PCCB/beta subunits.

The protein resides in the mitochondrion matrix. The enzyme catalyses propanoyl-CoA + hydrogencarbonate + ATP = (S)-methylmalonyl-CoA + ADP + phosphate + H(+). The catalysed reaction is butanoyl-CoA + hydrogencarbonate + ATP = (2S)-ethylmalonyl-CoA + ADP + phosphate + H(+). It participates in metabolic intermediate metabolism; propanoyl-CoA degradation; succinyl-CoA from propanoyl-CoA: step 1/3. This is one of the 2 subunits of the biotin-dependent propionyl-CoA carboxylase (PCC), a mitochondrial enzyme involved in the catabolism of odd chain fatty acids, branched-chain amino acids isoleucine, threonine, methionine, and valine and other metabolites. Propionyl-CoA carboxylase catalyzes the carboxylation of propionyl-CoA/propanoyl-CoA to D-methylmalonyl-CoA/(S)-methylmalonyl-CoA. Within the holoenzyme, the alpha subunit catalyzes the ATP-dependent carboxylation of the biotin carried by the biotin carboxyl carrier (BCC) domain, while the beta subunit then transfers the carboxyl group from carboxylated biotin to propionyl-CoA. Propionyl-CoA carboxylase also significantly acts on butyryl-CoA/butanoyl-CoA, which is converted to ethylmalonyl-CoA/(2S)-ethylmalonyl-CoA. Other alternative minor substrates include (2E)-butenoyl-CoA/crotonoyl-CoA. The polypeptide is Propionyl-CoA carboxylase beta chain, mitochondrial (Rattus norvegicus (Rat)).